Reading from the N-terminus, the 130-residue chain is Small ribosomal subunit protein uS8 (130 aa).

The protein belongs to the universal ribosomal protein uS8 family. In terms of assembly, part of the 30S ribosomal subunit. Contacts proteins S5 and S12.

In terms of biological role, one of the primary rRNA binding proteins, it binds directly to 16S rRNA central domain where it helps coordinate assembly of the platform of the 30S subunit. This chain is Small ribosomal subunit protein uS8, found in Shewanella baltica (strain OS223).